The primary structure comprises 502 residues: Maturase K (502 aa).

The protein belongs to the intron maturase 2 family. MatK subfamily.

The protein resides in the plastid. Its subcellular location is the chloroplast. Its function is as follows. Usually encoded in the trnK tRNA gene intron. Probably assists in splicing its own and other chloroplast group II introns. The chain is Maturase K from Ipomoea purpurea (Common morning glory).